The sequence spans 393 residues: Proteasome-activating nucleotidase (393 aa).

The stretch at 14–53 forms a coiled coil; it reads SDEVQLVRLLEEKIKSLQIEIENLRKELNYYKAEMEKMLS. Residues 178–183 and Tyr-317 each bind ATP; that span reads GTGKTM. The docks into pockets in the proteasome alpha-ring to cause gate opening stretch occupies residues 391 to 393; the sequence is KYS.

Belongs to the AAA ATPase family. In terms of assembly, homohexamer. The hexameric complex has a two-ring architecture resembling a top hat that caps the 20S proteasome core at one or both ends. Upon ATP-binding, the C-terminus of PAN interacts with the alpha-rings of the proteasome core by binding to the intersubunit pockets.

It localises to the cytoplasm. In terms of biological role, ATPase which is responsible for recognizing, binding, unfolding and translocation of substrate proteins into the archaeal 20S proteasome core particle. Is essential for opening the gate of the 20S proteasome via an interaction with its C-terminus, thereby allowing substrate entry and access to the site of proteolysis. Thus, the C-termini of the proteasomal ATPase function like a 'key in a lock' to induce gate opening and therefore regulate proteolysis. Unfolding activity requires energy from ATP hydrolysis, whereas ATP binding alone promotes ATPase-20S proteasome association which triggers gate opening, and supports translocation of unfolded substrates. The chain is Proteasome-activating nucleotidase from Saccharolobus islandicus (strain Y.N.15.51 / Yellowstone #2) (Sulfolobus islandicus).